We begin with the raw amino-acid sequence, 312 residues long: Glyoxylate/hydroxypyruvate reductase A (312 aa).

Arg-227 is a catalytic residue. His-275 functions as the Proton donor in the catalytic mechanism.

This sequence belongs to the D-isomer specific 2-hydroxyacid dehydrogenase family. GhrA subfamily.

Its subcellular location is the cytoplasm. The enzyme catalyses glycolate + NADP(+) = glyoxylate + NADPH + H(+). It carries out the reaction (R)-glycerate + NAD(+) = 3-hydroxypyruvate + NADH + H(+). The catalysed reaction is (R)-glycerate + NADP(+) = 3-hydroxypyruvate + NADPH + H(+). Catalyzes the NADPH-dependent reduction of glyoxylate and hydroxypyruvate into glycolate and glycerate, respectively. The sequence is that of Glyoxylate/hydroxypyruvate reductase A from Escherichia coli O157:H7.